We begin with the raw amino-acid sequence, 159 residues long: Ribosomal RNA large subunit methyltransferase H (159 aa).

S-adenosyl-L-methionine is bound by residues Leu-76, Gly-108, and 127 to 132 (FGLLTL).

This sequence belongs to the RNA methyltransferase RlmH family. As to quaternary structure, homodimer.

Its subcellular location is the cytoplasm. It catalyses the reaction pseudouridine(1915) in 23S rRNA + S-adenosyl-L-methionine = N(3)-methylpseudouridine(1915) in 23S rRNA + S-adenosyl-L-homocysteine + H(+). Specifically methylates the pseudouridine at position 1915 (m3Psi1915) in 23S rRNA. The protein is Ribosomal RNA large subunit methyltransferase H of Streptococcus mutans serotype c (strain ATCC 700610 / UA159).